Reading from the N-terminus, the 473-residue chain is MSADVSGTESGSESGPEPEPGPEPGPESRPESRPKPGPGPEPRPESGPEPGPRSGLRRGPKQGSERSQLCPEHFEPLSWFCLSERRPVCATCAGFGGRCHRHRIRRAEEHAEELRNKIVDQCERLQLQSAGISKYMAEVLQGKNQKAVVMASAARDLIIQRLSLVRSLCESEEQRLLEQVHGEEERAHQSILTQRAHWVDAVQKLDTLRTNMVDMITHLDDLQLIQREQEIFERAEEAEGILDPQDSEKLSFNEKCAWSPLLTQLWAASVLGSLSGVEEVLIDERTVSPLLHLSEDRRTLTFIAKKSKVCSDEPERFDHWPNALAATAFQTGLHAWIVNVKHSCAYKVGVASDQLPRKGSGNDCRLGHNAFSWVFSRYDQEFCFSHNGYHEPLPLLRCPAQLGMLLDLQAGELVFYEPASGTVLHIHRASFPQVLFPVFAVADQLISIVRGPLATVRLDSPPHHPCRSGHASR.

The disordered stretch occupies residues 1–69; sequence MSADVSGTES…PKQGSERSQL (69 aa). Pro residues predominate over residues 35–51; sequence KPGPGPEPRPESGPEPG. A B box-type zinc finger spans residues 65-113; it reads ERSQLCPEHFEPLSWFCLSERRPVCATCAGFGGRCHRHRIRRAEEHAEE. The region spanning 259–455 is the B30.2/SPRY domain; sequence SPLLTQLWAA…ISIVRGPLAT (197 aa).

Interacts with YWHAZ/14-3-3 protein zeta. Interacts with TRPV5 and TRPV6. As to expression, according to PubMed:10978534, testis-specific. According to PubMed:16371431, broadly expressed.

The protein localises to the cytoplasm. Its subcellular location is the membrane. In terms of biological role, may regulate epithelial calcium transport by inhibiting TRPV5 activity. In Mus musculus (Mouse), this protein is B box and SPRY domain-containing protein (Bspry).